Consider the following 330-residue polypeptide: tRNA pseudouridine synthase B (330 aa).

Residue Asp42 is the Nucleophile of the active site.

Belongs to the pseudouridine synthase TruB family. Type 1 subfamily.

It carries out the reaction uridine(55) in tRNA = pseudouridine(55) in tRNA. In terms of biological role, responsible for synthesis of pseudouridine from uracil-55 in the psi GC loop of transfer RNAs. In Lactococcus lactis subsp. cremoris (strain MG1363), this protein is tRNA pseudouridine synthase B.